The chain runs to 527 residues: DNA polymerase epsilon subunit 2 (527 aa).

This sequence belongs to the DNA polymerase epsilon subunit B family. In terms of assembly, component of the DNA polymerase epsilon complex consisting of four subunits: the catalytic subunit POLE and the accessory subunits POLE2, POLE3 and POLE4.

It localises to the nucleus. In terms of biological role, accessory component of the DNA polymerase epsilon complex. Participates in DNA repair and in chromosomal DNA replication. This Bos taurus (Bovine) protein is DNA polymerase epsilon subunit 2 (POLE2).